The sequence spans 255 residues: Ribonuclease HII (255 aa).

The region spanning 72–255 (QYIAGIDEAG…RSFAPVKAHE (184 aa)) is the RNase H type-2 domain. 3 residues coordinate a divalent metal cation: Asp78, Glu79, and Asp170.

This sequence belongs to the RNase HII family. The cofactor is Mn(2+). Mg(2+) is required as a cofactor.

The protein resides in the cytoplasm. It catalyses the reaction Endonucleolytic cleavage to 5'-phosphomonoester.. Endonuclease that specifically degrades the RNA of RNA-DNA hybrids. This chain is Ribonuclease HII, found in Bacillus licheniformis (strain ATCC 14580 / DSM 13 / JCM 2505 / CCUG 7422 / NBRC 12200 / NCIMB 9375 / NCTC 10341 / NRRL NRS-1264 / Gibson 46).